Reading from the N-terminus, the 446-residue chain is MPKRTFTKDDIRKFAEEENVRYLRLQFTDILGTIKNVEVPVSQLEKVLDNEMMFDGSSIEGFVRIEESDMYLHPDLDTWVIFPWTAGQGKVARLICDVYKTDGTPFEGDPRANLKRVLKEMEDLGFTDFNLGPEPEFFLFKLDEKGEPTLELNDDGGYFDLAPTDLGENCRRDIVLELEDMGFDIEASHHEVAPGQHEIDFKYADAVTACDNIQTFKLVVKTIARKHNLHATFMPKPLFGVNGSGMHFNVSLFKGKENAFFDPNTEMGLTETAYQFTAGVLKNARGFTAVCNPLVNSYKRLVPGYEAPCYIAWSGKNRSPLIRVPSSRGLSTRIEVRSVDPAANPYMALAAILESGLDGIKNKLKVPEPVNQNIYEMNREEREAVGIQDLPSTLYTALKAMRENEVIKKALGNHIYNQFINSKSIEWDYYRTQVSEWERDQYMKQY.

In terms of domain architecture, GS beta-grasp spans 18 to 103 (ENVRYLRLQF…LICDVYKTDG (86 aa)). The GS catalytic domain maps to 110-446 (PRANLKRVLK…WERDQYMKQY (337 aa)). 2 residues coordinate Mg(2+): Glu-134 and Glu-136. Glu-186 is an ATP binding site. Mg(2+)-binding residues include Glu-191 and Glu-198. L-glutamate contacts are provided by residues 242–243 (NG) and Gly-243. His-247 contacts Mg(2+). Residue Ser-251 participates in ATP binding. Residues Arg-300, Glu-306, and Arg-318 each coordinate L-glutamate. ATP contacts are provided by Arg-318 and Arg-323. Glu-335 provides a ligand contact to Mg(2+). Arg-337 contacts L-glutamate.

Belongs to the glutamine synthetase family. As to quaternary structure, oligomer of 12 subunits arranged in the form of two hexagons. In its feedback-inhibited form, interacts with TnrA in order to block its DNA-binding activity. The cofactor is Mg(2+).

The protein localises to the cytoplasm. It catalyses the reaction L-glutamate + NH4(+) + ATP = L-glutamine + ADP + phosphate + H(+). With respect to regulation, inhibited by glutamine. Functionally, glutamine synthetase (GS) is an unusual multitasking protein that functions as an enzyme, a transcription coregulator, and a chaperone in ammonium assimilation and in the regulation of genes involved in nitrogen metabolism. It catalyzes the ATP-dependent biosynthesis of glutamine from glutamate and ammonia. Feedback-inhibited GlnA also interacts with and regulates the activity of the transcriptional regulator TnrA. During nitrogen limitation, TnrA is in its DNA-binding active state and turns on the transcription of genes required for nitrogen assimilation. Under conditions of nitrogen excess, feedback-inhibited GlnA forms a stable complex with TnrA, which inhibits its DNA-binding activity. In contrast, feedback-inhibited GlnA acts as a chaperone to stabilize the DNA-binding activity of GlnR, which represses the transcription of nitrogen assimilation genes. In Staphylococcus aureus (strain MRSA252), this protein is Glutamine synthetase.